The primary structure comprises 70 residues: uncharacterized protein (70 aa).

The chain crosses the membrane as a helical span at residues 12–32 (VLFMNFFSVFVCTIGTLFLVF).

The protein resides in the membrane. This is an uncharacterized protein from Saccharomyces cerevisiae (strain ATCC 204508 / S288c) (Baker's yeast).